The primary structure comprises 250 residues: Proteasome subunit alpha type-7 (250 aa).

The protein belongs to the peptidase T1A family. As to quaternary structure, the 26S proteasome consists of a 20S proteasome core and two 19S regulatory subunits. The 20S proteasome core is composed of 28 subunits that are arranged in four stacked rings, resulting in a barrel-shaped structure. The two end rings are each formed by seven alpha subunits, and the two central rings are each formed by seven beta subunits. The catalytic chamber with the active sites is on the inside of the barrel.

The protein localises to the cytoplasm. The protein resides in the nucleus. Functionally, the proteasome is a multicatalytic proteinase complex which is characterized by its ability to cleave peptides with Arg, Phe, Tyr, Leu, and Glu adjacent to the leaving group at neutral or slightly basic pH. The proteasome has an ATP-dependent proteolytic activity. The sequence is that of Proteasome subunit alpha type-7 (psmA7) from Dictyostelium discoideum (Social amoeba).